A 343-amino-acid chain; its full sequence is Ribosomal RNA small subunit methyltransferase C (343 aa).

Belongs to the methyltransferase superfamily. RsmC family. Monomer.

Its subcellular location is the cytoplasm. It catalyses the reaction guanosine(1207) in 16S rRNA + S-adenosyl-L-methionine = N(2)-methylguanosine(1207) in 16S rRNA + S-adenosyl-L-homocysteine + H(+). Functionally, specifically methylates the guanine in position 1207 of 16S rRNA in the 30S particle. This is Ribosomal RNA small subunit methyltransferase C from Shigella flexneri serotype 5b (strain 8401).